The chain runs to 515 residues: 1-pyrroline-5-carboxylate dehydrogenase (515 aa).

Active-site residues include Glu286 and Cys320.

Belongs to the aldehyde dehydrogenase family. RocA subfamily.

It carries out the reaction L-glutamate 5-semialdehyde + NAD(+) + H2O = L-glutamate + NADH + 2 H(+). It participates in amino-acid degradation; L-proline degradation into L-glutamate; L-glutamate from L-proline: step 2/2. This Anoxybacillus flavithermus (strain DSM 21510 / WK1) protein is 1-pyrroline-5-carboxylate dehydrogenase.